Reading from the N-terminus, the 488-residue chain is Germacrene A hydroxylase (488 aa).

Over 1–6 (MELSFT) the chain is Cytoplasmic. The chain crosses the membrane as a helical; Signal-anchor for type II membrane protein span at residues 7 to 23 (TSIAVATIVFVLFKLAT). Residues 24–488 (RPKSNKKLLP…KTHLVLVPSF (465 aa)) lie on the Lumenal side of the membrane. N-linked (GlcNAc...) asparagine glycosylation is found at N255, N260, and N379. C432 serves as a coordination point for heme.

The protein belongs to the cytochrome P450 family. The cofactor is heme.

The protein localises to the endoplasmic reticulum membrane. The enzyme catalyses (+)-(R)-germacrene A + 3 reduced [NADPH--hemoprotein reductase] + 3 O2 = germacra-1(10),4,11(13)-trien-12-oate + 3 oxidized [NADPH--hemoprotein reductase] + 4 H2O + 4 H(+). It functions in the pathway secondary metabolite biosynthesis; terpenoid biosynthesis. Its function is as follows. Involved in the biosynthesis of germacrene-derived sesquiterpene lactones. Catalyzes three consecutive oxidations of germacrene A to produce germacrene A acid. Could also catalyze the three-step oxidation of non-natural substrate amorphadiene to artemisinic acid. The protein is Germacrene A hydroxylase of Saussurea costus (Costus).